Reading from the N-terminus, the 286-residue chain is Aquaporin PIP1-1 (286 aa).

N-acetylmethionine is present on methionine 1. The disordered stretch occupies residues 1 to 34; it reads MEGKEEDVRVGANKFPERQPIGTSAQSDKDYKEP. Over 1 to 54 the chain is Cytoplasmic; the sequence is MEGKEEDVRVGANKFPERQPIGTSAQSDKDYKEPPPAPFFEPGELSSWSFWRAG. A helical transmembrane segment spans residues 55–75; that stretch reads IAEFIATFLFLYITVLTVMGV. Over 76 to 91 the chain is Extracellular; it reads KRSPNMCASVGIQGIA. The chain crosses the membrane as a helical span at residues 92–112; it reads WAFGGMIFALVYCTAGISGGH. The Cytoplasmic segment spans residues 113-132; that stretch reads INPAVTFGLFLARKLSLTRA. Positions 114 to 116 match the NPA 1 motif; the sequence is NPA. A helical membrane pass occupies residues 133 to 153; the sequence is LYYIVMQCLGAICGAGVVKGF. Over 154–174 the chain is Extracellular; the sequence is QPKQYQALGGGANTVAHGYTK. The helical transmembrane segment at 175–195 threads the bilayer; the sequence is GSGLGAEIIGTFVLVYTVFSA. Topologically, residues 196–208 are cytoplasmic; the sequence is TDAKRNARDSHVP. A helical membrane pass occupies residues 209–229; the sequence is ILAPLPIGFAVFLVHLATIPI. Residues 230–256 lie on the Extracellular side of the membrane; sequence TGTGINPARSLGAAIIYNKDHSWDDHW. An NPA 2 motif is present at residues 235-237; the sequence is NPA. A helical membrane pass occupies residues 257–277; it reads VFWVGPFIGAALAALYHVVVI. At 278–286 the chain is on the cytoplasmic side; the sequence is RAIPFKSRS. Serine 284 bears the Phosphoserine mark.

The protein belongs to the MIP/aquaporin (TC 1.A.8) family. PIP (TC 1.A.8.11) subfamily. As to expression, widely expressed. Expressed in roots, above ground and in flower buds.

The protein resides in the cell membrane. Water channel required to facilitate the transport of water across cell membrane. Its function is impaired by Hg(2+). In Arabidopsis thaliana (Mouse-ear cress), this protein is Aquaporin PIP1-1 (PIP1-1).